The following is a 158-amino-acid chain: Ribosome maturation factor RimP (158 aa).

This sequence belongs to the RimP family.

The protein localises to the cytoplasm. Required for maturation of 30S ribosomal subunits. The polypeptide is Ribosome maturation factor RimP (Pseudomonas fluorescens (strain SBW25)).